We begin with the raw amino-acid sequence, 184 residues long: GTP cyclohydrolase 1 (184 aa).

3 residues coordinate Zn(2+): Cys75, His78, and Cys146.

The protein belongs to the GTP cyclohydrolase I family. In terms of assembly, toroid-shaped homodecamer, composed of two pentamers of five dimers.

The catalysed reaction is GTP + H2O = 7,8-dihydroneopterin 3'-triphosphate + formate + H(+). Its pathway is cofactor biosynthesis; 7,8-dihydroneopterin triphosphate biosynthesis; 7,8-dihydroneopterin triphosphate from GTP: step 1/1. This is GTP cyclohydrolase 1 from Streptococcus pneumoniae serotype 2 (strain D39 / NCTC 7466).